A 230-amino-acid polypeptide reads, in one-letter code: Ribonuclease 3 (230 aa).

The 121-residue stretch at 5 to 125 (YSRLYKILGY…IIGAIYLDSD (121 aa)) folds into the RNase III domain. Residue Glu-40 coordinates Mg(2+). Asp-44 is a catalytic residue. 2 residues coordinate Mg(2+): Asp-111 and Glu-114. The active site involves Glu-114. A DRBM domain is found at 153–223 (DSKSKLQEIL…AEKMIQILSQ (71 aa)).

This sequence belongs to the ribonuclease III family. As to quaternary structure, homodimer. Mg(2+) serves as cofactor.

It is found in the cytoplasm. It catalyses the reaction Endonucleolytic cleavage to 5'-phosphomonoester.. Its function is as follows. Digests double-stranded RNA. Involved in the processing of primary rRNA transcript to yield the immediate precursors to the large and small rRNAs (23S and 16S). Processes some mRNAs, and tRNAs when they are encoded in the rRNA operon. Processes pre-crRNA and tracrRNA of type II CRISPR loci if present in the organism. The sequence is that of Ribonuclease 3 from Francisella philomiragia subsp. philomiragia (strain ATCC 25017 / CCUG 19701 / FSC 153 / O#319-036).